The sequence spans 239 residues: Small ribosomal subunit protein uS2 (239 aa).

The protein belongs to the universal ribosomal protein uS2 family.

The polypeptide is Small ribosomal subunit protein uS2 (Prochlorococcus marinus (strain MIT 9313)).